The primary structure comprises 353 residues: Sulfate/thiosulfate import ATP-binding protein CysA (353 aa).

Residues 3–237 (IQVKNIEKHF…PATPFVFDFL (235 aa)) enclose the ABC transporter domain. 35 to 42 (GPSGCGKT) lines the ATP pocket.

The protein belongs to the ABC transporter superfamily. Sulfate/tungstate importer (TC 3.A.1.6) family. As to quaternary structure, the complex is composed of two ATP-binding proteins (CysA), two transmembrane proteins (CysT and CysW) and a solute-binding protein (CysP).

It is found in the cell inner membrane. It carries out the reaction sulfate(out) + ATP + H2O = sulfate(in) + ADP + phosphate + H(+). It catalyses the reaction thiosulfate(out) + ATP + H2O = thiosulfate(in) + ADP + phosphate + H(+). Functionally, part of the ABC transporter complex CysAWTP involved in sulfate/thiosulfate import. Responsible for energy coupling to the transport system. The protein is Sulfate/thiosulfate import ATP-binding protein CysA of Acinetobacter baylyi (strain ATCC 33305 / BD413 / ADP1).